The following is a 314-amino-acid chain: MSFASEMKNELTRIDVDEMNAKAELSALIRMNGALSLSNQQFVINVQTENATTARRIYSLIKRVFNVEVEILVRKKMKLKKNNIYICRTKMKAKEILDELGILKDGIFTHEIDHSMIQDDEMRRSYLRGAFLAGGSVNNPETSSYHLEIFSQNESHAEGLTKLMNSYELNAKHLERKKGSITYLKEAEKISDFLSLIGGYQALLKFEDVRIVRDMRNSVNRLVNCETANLNKTVSAAMKQVESIKLIDKEIGIENLPDRLREIARIRVEHQEISLKELGEMVSTGPISKSGVNHRLRKLNDLADKIRNGEQIEL.

Positions 274 to 308 (SLKELGEMVSTGPISKSGVNHRLRKLNDLADKIRN) form a DNA-binding region, H-T-H motif.

This sequence belongs to the WhiA family.

Involved in cell division and chromosome segregation. The protein is Probable cell division protein WhiA of Staphylococcus aureus (strain Mu3 / ATCC 700698).